We begin with the raw amino-acid sequence, 425 residues long: Serine--tRNA ligase (425 aa).

L-serine is bound at residue 233-235 (TAE). 264–266 (RAE) contributes to the ATP binding site. An L-serine-binding site is contributed by Glu-287. 351–354 (EISS) contributes to the ATP binding site. Position 387 (Ser-387) interacts with L-serine.

It belongs to the class-II aminoacyl-tRNA synthetase family. Type-1 seryl-tRNA synthetase subfamily. In terms of assembly, homodimer. The tRNA molecule binds across the dimer.

It is found in the cytoplasm. The catalysed reaction is tRNA(Ser) + L-serine + ATP = L-seryl-tRNA(Ser) + AMP + diphosphate + H(+). The enzyme catalyses tRNA(Sec) + L-serine + ATP = L-seryl-tRNA(Sec) + AMP + diphosphate + H(+). It functions in the pathway aminoacyl-tRNA biosynthesis; selenocysteinyl-tRNA(Sec) biosynthesis; L-seryl-tRNA(Sec) from L-serine and tRNA(Sec): step 1/1. Its function is as follows. Catalyzes the attachment of serine to tRNA(Ser). Is also able to aminoacylate tRNA(Sec) with serine, to form the misacylated tRNA L-seryl-tRNA(Sec), which will be further converted into selenocysteinyl-tRNA(Sec). This chain is Serine--tRNA ligase, found in Clostridium botulinum (strain Alaska E43 / Type E3).